The following is a 163-amino-acid chain: NADH-quinone oxidoreductase subunit I (163 aa).

2 4Fe-4S ferredoxin-type domains span residues 53–83 (LRRYPNGEERCIACKLCEAICPAQAITIEAG) and 94–123 (VRYDIDMVKCIYCGFCQEACPVEAIVEGPN). [4Fe-4S] cluster contacts are provided by Cys63, Cys66, Cys69, Cys73, Cys103, Cys106, Cys109, and Cys113.

This sequence belongs to the complex I 23 kDa subunit family. NDH-1 is composed of 14 different subunits. Subunits NuoA, H, J, K, L, M, N constitute the membrane sector of the complex. It depends on [4Fe-4S] cluster as a cofactor.

The protein resides in the cell inner membrane. It catalyses the reaction a quinone + NADH + 5 H(+)(in) = a quinol + NAD(+) + 4 H(+)(out). Functionally, NDH-1 shuttles electrons from NADH, via FMN and iron-sulfur (Fe-S) centers, to quinones in the respiratory chain. The immediate electron acceptor for the enzyme in this species is believed to be ubiquinone. Couples the redox reaction to proton translocation (for every two electrons transferred, four hydrogen ions are translocated across the cytoplasmic membrane), and thus conserves the redox energy in a proton gradient. In Bartonella quintana (strain Toulouse) (Rochalimaea quintana), this protein is NADH-quinone oxidoreductase subunit I.